The sequence spans 341 residues: tRNA N6-adenosine threonylcarbamoyltransferase (341 aa).

Positions 115 and 119 each coordinate Fe cation. Substrate-binding positions include 137-141 (IVSGG), Asp-170, Gly-183, Asp-187, and Asn-276. Asp-304 contacts Fe cation.

Belongs to the KAE1 / TsaD family. Fe(2+) serves as cofactor.

The protein resides in the cytoplasm. It catalyses the reaction L-threonylcarbamoyladenylate + adenosine(37) in tRNA = N(6)-L-threonylcarbamoyladenosine(37) in tRNA + AMP + H(+). Functionally, required for the formation of a threonylcarbamoyl group on adenosine at position 37 (t(6)A37) in tRNAs that read codons beginning with adenine. Is involved in the transfer of the threonylcarbamoyl moiety of threonylcarbamoyl-AMP (TC-AMP) to the N6 group of A37, together with TsaE and TsaB. TsaD likely plays a direct catalytic role in this reaction. The sequence is that of tRNA N6-adenosine threonylcarbamoyltransferase from Staphylococcus aureus (strain USA300).